The primary structure comprises 513 residues: GMP synthase [glutamine-hydrolyzing] (513 aa).

A Glutamine amidotransferase type-1 domain is found at T7–E197. Catalysis depends on C84, which acts as the Nucleophile. Active-site residues include H171 and E173. The GMPS ATP-PPase domain maps to W198–R387. Residue S225 to S231 participates in ATP binding.

In terms of assembly, homodimer.

The catalysed reaction is XMP + L-glutamine + ATP + H2O = GMP + L-glutamate + AMP + diphosphate + 2 H(+). It functions in the pathway purine metabolism; GMP biosynthesis; GMP from XMP (L-Gln route): step 1/1. Its function is as follows. Catalyzes the synthesis of GMP from XMP. This chain is GMP synthase [glutamine-hydrolyzing], found in Heliobacterium modesticaldum (strain ATCC 51547 / Ice1).